The sequence spans 415 residues: Magnesium-chelatase subunit ChlI, chloroplastic (415 aa).

The N-terminal 67 residues, 1 to 67, are a transit peptide targeting the chloroplast; sequence MASAFSPATA…APSATQQEAK (67 aa). 2 disulfide bridges follow: Cys-93–Cys-184 and Cys-345–Cys-387.

Belongs to the Mg-chelatase subunits D/I family. The magnesium chelatase complex is a heterotrimer consisting of subunits CHLI, CHLD and CHLH.

The protein localises to the plastid. Its subcellular location is the chloroplast. It catalyses the reaction protoporphyrin IX + Mg(2+) + ATP + H2O = Mg-protoporphyrin IX + ADP + phosphate + 3 H(+). It functions in the pathway porphyrin-containing compound metabolism; chlorophyll biosynthesis. Its activity is regulated as follows. Redox regulation; active in reducing conditions, inactive in oxidizing conditions. Thioredoxins f and m mediate the reversible reductive activation of oxidized CHLI. In terms of biological role, involved in chlorophyll biosynthesis. Catalyzes the insertion of magnesium ion into protoporphyrin IX to yield Mg-protoporphyrin IX. The reaction takes place in two steps, with an ATP-dependent activation followed by an ATP-dependent chelation step. The chain is Magnesium-chelatase subunit ChlI, chloroplastic (CHLI) from Oryza sativa subsp. japonica (Rice).